A 368-amino-acid polypeptide reads, in one-letter code: Phosphate acyltransferase (368 aa).

This sequence belongs to the PlsX family. In terms of assembly, homodimer. Probably interacts with PlsY.

It localises to the cytoplasm. It catalyses the reaction a fatty acyl-[ACP] + phosphate = an acyl phosphate + holo-[ACP]. It functions in the pathway lipid metabolism; phospholipid metabolism. Its function is as follows. Catalyzes the reversible formation of acyl-phosphate (acyl-PO(4)) from acyl-[acyl-carrier-protein] (acyl-ACP). This enzyme utilizes acyl-ACP as fatty acyl donor, but not acyl-CoA. The protein is Phosphate acyltransferase of Cereibacter sphaeroides (strain ATCC 17025 / ATH 2.4.3) (Rhodobacter sphaeroides).